A 390-amino-acid chain; its full sequence is Bifunctional enzyme IspD/IspF (390 aa).

The segment at 1–229 (MAAGRGERAG…RQDHAVFPDI (229 aa)) is 2-C-methyl-D-erythritol 4-phosphate cytidylyltransferase. A 2-C-methyl-D-erythritol 2,4-cyclodiphosphate synthase region spans residues 230 to 390 (RTGNGYDVHS…TVIYPGEVPE (161 aa)). The a divalent metal cation site is built by Asp-236 and His-238. 4-CDP-2-C-methyl-D-erythritol 2-phosphate is bound by residues 236–238 (DVH) and 262–263 (HS). His-270 is an a divalent metal cation binding site. Residues 284–286 (DIG), 360–363 (TTNE), Phe-367, and Arg-370 each bind 4-CDP-2-C-methyl-D-erythritol 2-phosphate.

It in the N-terminal section; belongs to the IspD/TarI cytidylyltransferase family. IspD subfamily. In the C-terminal section; belongs to the IspF family. The cofactor is a divalent metal cation.

The enzyme catalyses 2-C-methyl-D-erythritol 4-phosphate + CTP + H(+) = 4-CDP-2-C-methyl-D-erythritol + diphosphate. It catalyses the reaction 4-CDP-2-C-methyl-D-erythritol 2-phosphate = 2-C-methyl-D-erythritol 2,4-cyclic diphosphate + CMP. Its pathway is isoprenoid biosynthesis; isopentenyl diphosphate biosynthesis via DXP pathway; isopentenyl diphosphate from 1-deoxy-D-xylulose 5-phosphate: step 2/6. It participates in isoprenoid biosynthesis; isopentenyl diphosphate biosynthesis via DXP pathway; isopentenyl diphosphate from 1-deoxy-D-xylulose 5-phosphate: step 4/6. Functionally, bifunctional enzyme that catalyzes the formation of 4-diphosphocytidyl-2-C-methyl-D-erythritol from CTP and 2-C-methyl-D-erythritol 4-phosphate (MEP) (IspD), and catalyzes the conversion of 4-diphosphocytidyl-2-C-methyl-D-erythritol 2-phosphate (CDP-ME2P) to 2-C-methyl-D-erythritol 2,4-cyclodiphosphate (ME-CPP) with a corresponding release of cytidine 5-monophosphate (CMP) (IspF). The polypeptide is Bifunctional enzyme IspD/IspF (Brucella suis biovar 1 (strain 1330)).